Consider the following 691-residue polypeptide: Large T antigen (691 aa).

Residue Met-1 is modified to N-acetylmethionine; by host. The 64-residue stretch at 12–75 (ELMDLLGLER…VKVAHQPDFG (64 aa)) folds into the J domain. Positions 105–109 (LFCHE) match the LXCXE motif motif. A phosphoserine; by host mark is found at Ser-114, Ser-122, and Ser-125. The interval 117–138 (EATADSQHSTPPKKKRKVEDPK) is disordered. Thr-126 is modified (phosphothreonine; by host). The Nuclear localization signal motif lies at 127 to 134 (PPKKKRKV). Positions 141 to 256 (PSDLHQFLSQ…EESIQGGLKE (116 aa)) form a DNA-binding region, T-ag OBD. Residues 267–359 (TKQVSWKLIT…KRVDTLHMTR (93 aa)) form a T-ag D1-type zinc finger. 4 residues coordinate Zn(2+): Cys-304, Cys-307, His-315, and His-319. The SF3 helicase domain occupies 402–562 (KMDSVIFDFL…IYLRKSLQNS (161 aa)). ATP is bound at residue 428–435 (GPIDSGKT). Residues 634–670 (EDSETEDSGHGSSTESQSQCSSQVSDTSAPDSENPHS) form a disordered region. Over residues 645 to 661 (SSTESQSQCSSQVSDTS) the composition is skewed to low complexity. Ser-661 carries the post-translational modification Phosphoserine; by host. The residue at position 683 (Lys-683) is an N6-acetyllysine; by host. Thr-687 bears the Phosphothreonine; by host mark.

In terms of assembly, forms homohexamers in the presence of ATP. Interacts with host HDAC1. Interacts (via LXCXE domain) with host RB1; the interaction induces the aberrant dissociation of RB1-E2F1 complex thereby disrupting RB1's activity. Interacts (via LXCXE domain) with host pRB-related proteins RBL1 and RBL2. Interacts (via C-terminus) with host TOP1 and POLA1 allowing DNA replication. Interacts with host TP53, inhibiting TP53 binding to DNA. Interacts with host preinitiation complex components TBP, TFIIA and TFIID to regulate transcription initiation. Mg(2+) is required as a cofactor. Phosphorylated on both serine and threonine residues. Small t antigen inhibits the dephosphorylation by the AC form of PP2A. Post-translationally, O-Glycosylated near the C-terminal region. In terms of processing, acetylated by CBP in a TP53-dependent manner.

The protein resides in the host nucleus. The catalysed reaction is Couples ATP hydrolysis with the unwinding of duplex DNA by translocating in the 3'-5' direction.. It carries out the reaction ATP + H2O = ADP + phosphate + H(+). Its function is as follows. Isoform large T antigen is a key early protein essential for both driving viral replication and inducing cellular transformation. Plays a role in viral genome replication by driving entry of quiescent cells into the cell cycle and by autoregulating the synthesis of viral early mRNA. Displays highly oncogenic activities by corrupting the host cellular checkpoint mechanisms that guard cell division and the transcription, replication, and repair of DNA. Participates in the modulation of cellular gene expression preceeding viral DNA replication. This step involves binding to host key cell cycle regulators retinoblastoma protein RB1/pRb and TP53. Induces the disassembly of host E2F1 transcription factors from RB1, thus promoting transcriptional activation of E2F1-regulated S-phase genes. Inhibits host TP53 binding to DNA, abrogating the ability of TP53 to stimulate gene expression. Plays the role of a TFIID-associated factor (TAF) in transcription initiation for all three RNA polymerases, by stabilizing the TBP-TFIIA complex on promoters. Initiates viral DNA replication and unwinding via interactions with the viral origin of replication. Binds two adjacent sites in the SV40 origin. The replication fork movement is facilitated by Large T antigen helicase activity. Has processive 3'-5' DNA helicase activity which requires a short 3' single-stranded region and ATP. Activates the transcription of viral late mRNA, through host TBP and TFIIA stabilization. Interferes with histone deacetylation mediated by HDAC1, leading to activation of transcription. The sequence is that of Large T antigen from BK polyomavirus (strain AS) (BKPyV).